Here is a 435-residue protein sequence, read N- to C-terminus: Histidine--tRNA ligase (435 aa).

Residues 415-435 (SVPLSAFPGDYDRPTFEDFAE) form a disordered region. Basic and acidic residues predominate over residues 424–435 (DYDRPTFEDFAE).

It belongs to the class-II aminoacyl-tRNA synthetase family.

The protein localises to the cytoplasm. It carries out the reaction tRNA(His) + L-histidine + ATP = L-histidyl-tRNA(His) + AMP + diphosphate + H(+). In Haloarcula marismortui (strain ATCC 43049 / DSM 3752 / JCM 8966 / VKM B-1809) (Halobacterium marismortui), this protein is Histidine--tRNA ligase.